The sequence spans 412 residues: MNDLIINHIAELILPRSTDKPLKGKELDELNVVKNGTVVIKDGKIVYAGTHTDDYDATETIDASGKVVSPALVDAHTHLTFGGSREHEMSLKRQGKSYLEILEMGGGILSTVNATRETSEDDLFKKAEHDLLTMIKHGVLAVESKSGYGLDRENELKQLKVSNRLAEKYDLDMKHTFLGPHAVPKEASSNEAFLEEMIALLPEVKQYADFADIFCETGVFTIEQSQHYMQKAKEAGFKVKIHADEIDPLGGLELAIDEQAISADHLVASSDKGKEKLRNSDTVAVLLPATTFYLGKEDYADARGMLDNNGAIALATDYNPGSSVTNNLQLVMAIAALKLKLSPNEVWNAVTVNAAKAIDINAGTINTGDKANLVIWDAPNHEYIPYHFGINHAEKVIKDGKVIVDNTVSFKA.

2 residues coordinate Fe(3+): His-76 and His-78. Positions 76 and 78 each coordinate Zn(2+). 4-imidazolone-5-propanoate is bound by residues Arg-85, Tyr-148, and His-181. Residue Tyr-148 participates in N-formimidoyl-L-glutamate binding. His-242 contributes to the Fe(3+) binding site. His-242 provides a ligand contact to Zn(2+). Glu-245 provides a ligand contact to 4-imidazolone-5-propanoate. Asp-317 serves as a coordination point for Fe(3+). Residue Asp-317 participates in Zn(2+) binding. The N-formimidoyl-L-glutamate site is built by Asn-319 and Gly-321. Ser-322 serves as a coordination point for 4-imidazolone-5-propanoate.

Belongs to the metallo-dependent hydrolases superfamily. HutI family. It depends on Zn(2+) as a cofactor. Fe(3+) is required as a cofactor.

It localises to the cytoplasm. It carries out the reaction 4-imidazolone-5-propanoate + H2O = N-formimidoyl-L-glutamate. Its pathway is amino-acid degradation; L-histidine degradation into L-glutamate; N-formimidoyl-L-glutamate from L-histidine: step 3/3. Catalyzes the hydrolytic cleavage of the carbon-nitrogen bond in imidazolone-5-propanoate to yield N-formimidoyl-L-glutamate. It is the third step in the universal histidine degradation pathway. The protein is Imidazolonepropionase of Staphylococcus aureus (strain USA300 / TCH1516).